Reading from the N-terminus, the 547-residue chain is Immunoglobulin epsilon heavy chain (547 aa).

Residue Gln-1 is modified to Pyrrolidone carboxylic acid. Ig-like domains follow at residues Gln-1–Thr-120, Pro-130–Ser-223, Pro-232–Ala-329, Pro-333–Ser-437, and Pro-443–Ser-542. The tract at residues Gln-1 to Ser-124 is variable (V) domain, involved in antigen recognition. Cystine bridges form between Cys-22/Cys-96, Cys-139/Cys-225, Cys-153/Cys-207, Cys-254/Cys-312, Cys-358/Cys-418, and Cys-464/Cys-524. Residues Gly-125–Lys-547 are constant (C) domain. Asn-145, Asn-173, Asn-219, Asn-265, Asn-371, Asn-383, and Asn-394 each carry an N-linked (GlcNAc...) asparagine glycan.

As to quaternary structure, immunoglobulins are composed of two identical heavy chains and two identical light chains; disulfide-linked.

The protein resides in the secreted. The protein localises to the cell membrane. Functionally, immunoglobulins, also known as antibodies, are membrane-bound or secreted glycoproteins produced by B lymphocytes. In the recognition phase of humoral immunity, the membrane-bound immunoglobulins serve as receptors which, upon binding of a specific antigen, trigger the clonal expansion and differentiation of B lymphocytes into immunoglobulins-secreting plasma cells. Secreted immunoglobulins mediate the effector phase of humoral immunity, which results in the elimination of bound antigens. The antigen binding site is formed by the variable domain of one heavy chain, together with that of its associated light chain. Thus, each immunoglobulin has two antigen binding sites with remarkable affinity for a particular antigen. The variable domains are assembled by a process called V-(D)-J rearrangement and can then be subjected to somatic hypermutations which, after exposure to antigen and selection, allow affinity maturation for a particular antigen. In Homo sapiens (Human), this protein is Immunoglobulin epsilon heavy chain.